Reading from the N-terminus, the 331-residue chain is Major outer membrane protein P.IB (331 aa).

Residues methionine 1 to alanine 19 form the signal peptide.

This sequence belongs to the Gram-negative porin family. As to quaternary structure, homotrimer.

The protein localises to the cell outer membrane. Its function is as follows. Serves as a slightly cation selective porin. This chain is Major outer membrane protein P.IB (porB), found in Neisseria meningitidis serogroup B.